Here is a 235-residue protein sequence, read N- to C-terminus: Golgi to ER traffic protein 1 (235 aa).

Position 1 (Met1) is a topological domain, lumenal. Residues 2 to 21 (HWAAAVAIFFIVVTKFLQYT) form a helical membrane-spanning segment. The Cytoplasmic portion of the chain corresponds to 22-104 (NKYHEKWISK…AFQAHLHKLR (83 aa)). Positions 68–104 (WTKNNRKLDSLDKEINNLKDEIQSENKAFQAHLHKLR) form a coiled coil. Residues 105-125 (LLALTVPFFVFKIMYGKTPVY) traverse the membrane as a helical segment. The Lumenal segment spans residues 126 to 181 (KLSSSTSTLFPTFVSGVWSQGWLYVLLHPLRTISQKWHIMEGKFGASKFDDMALQS). Residues 182-198 (VSLGIWVWALMNVINGV) form a helical membrane-spanning segment. The Cytoplasmic portion of the chain corresponds to 199–235 (EFIVKQLFLTPKMEAPASVETQEEKALDAVDDAIILD).

Belongs to the WRB/GET1 family. In terms of assembly, component of the Golgi to ER traffic (GET) complex, which is composed of GET1, GET2 and GET3. Within the complex, GET1 and GET2 form a heterotetramer which is stabilized by phosphatidylinositol binding and which binds to the GET3 homodimer.

Its subcellular location is the endoplasmic reticulum membrane. It is found in the golgi apparatus membrane. Required for the post-translational delivery of tail-anchored (TA) proteins to the endoplasmic reticulum. Together with GET2, acts as a membrane receptor for soluble GET3, which recognizes and selectively binds the transmembrane domain of TA proteins in the cytosol. The GET complex cooperates with the HDEL receptor ERD2 to mediate the ATP-dependent retrieval of resident ER proteins that contain a C-terminal H-D-E-L retention signal from the Golgi to the ER. This Saccharomyces cerevisiae (strain RM11-1a) (Baker's yeast) protein is Golgi to ER traffic protein 1.